Reading from the N-terminus, the 367-residue chain is Teichoic acid glycerol-phosphate primase (367 aa).

It belongs to the CDP-glycerol glycerophosphotransferase family.

It is found in the cell membrane. The catalysed reaction is N-acetyl-beta-D-mannosaminyl-(1-&gt;4)-N-acetyl-alpha-D-glucosaminyl di-trans,octa-cis-undecaprenyl diphosphate + CDP-glycerol = 4-O-[(2R)-glycerylphospho]-N-acetyl-beta-D-mannosaminyl-(1-&gt;4)-N-acetyl-alpha-D-glucosaminyl di-trans,octa-cis-undecaprenyl diphosphate + CMP + H(+). It functions in the pathway cell wall biogenesis; poly(ribitol phosphate) teichoic acid biosynthesis. In terms of biological role, catalyzes the addition of a single glycerol phosphate residue to the prenoldiphosphate-linked disaccharide. The protein is Teichoic acid glycerol-phosphate primase (tarB) of Staphylococcus aureus (strain NCTC 8325 / PS 47).